Reading from the N-terminus, the 328-residue chain is MQTNLLKPKAINVDPLGGHRAKVTLEPFERGFGHTLGNALRRVLLSSMVGYAPTEVTIAGVLHEYSTVDGVQEDVVHIMLNLKGVVFRLHNRDEVTLVLRKEGEGPVKASDIQTPHDVEIINPDHVIAHLAQGGKLDMQIKVEKGRGYVPGSMRRYADEPTKSIGRIVLDASFSPLKRVSYTVESARVEQRTDLDKLVMEIETNGAISPEEAIRASAKILVEQLAVFAQLEGSDLAIFEAPAPRAQHFDPILLRPVDELELTVRSANCLKAENIYYIGDLIQRTETELLKTPNLGRKSLNEIKEVLASRGLTLGARLENWPPQGLDKR.

An alpha N-terminal domain (alpha-NTD) region spans residues 1-231 (MQTNLLKPKA…EQLAVFAQLE (231 aa)). An alpha C-terminal domain (alpha-CTD) region spans residues 248-328 (FDPILLRPVD…NWPPQGLDKR (81 aa)).

It belongs to the RNA polymerase alpha chain family. Homodimer. The RNAP catalytic core consists of 2 alpha, 1 beta, 1 beta' and 1 omega subunit. When a sigma factor is associated with the core the holoenzyme is formed, which can initiate transcription.

It catalyses the reaction RNA(n) + a ribonucleoside 5'-triphosphate = RNA(n+1) + diphosphate. Functionally, DNA-dependent RNA polymerase catalyzes the transcription of DNA into RNA using the four ribonucleoside triphosphates as substrates. In Leptothrix cholodnii (strain ATCC 51168 / LMG 8142 / SP-6) (Leptothrix discophora (strain SP-6)), this protein is DNA-directed RNA polymerase subunit alpha.